We begin with the raw amino-acid sequence, 686 residues long: DNA gyrase subunit B (686 aa).

Residues 1-27 (MADSGNPNENNPSTDTGVNDAVSTSHG) show a composition bias toward polar residues. The segment at 1-29 (MADSGNPNENNPSTDTGVNDAVSTSHGDA) is disordered. Residues 465 to 579 (CEIFIVEGDS…SGHVYLSRPP (115 aa)) form the Toprim domain. Mg(2+)-binding residues include glutamate 471, aspartate 544, and aspartate 546.

Belongs to the type II topoisomerase GyrB family. In terms of assembly, heterotetramer, composed of two GyrA and two GyrB chains. In the heterotetramer, GyrA contains the active site tyrosine that forms a transient covalent intermediate with DNA, while GyrB binds cofactors and catalyzes ATP hydrolysis. The cofactor is Mg(2+). Mn(2+) is required as a cofactor. It depends on Ca(2+) as a cofactor.

It is found in the cytoplasm. The catalysed reaction is ATP-dependent breakage, passage and rejoining of double-stranded DNA.. Functionally, a type II topoisomerase that negatively supercoils closed circular double-stranded (ds) DNA in an ATP-dependent manner to modulate DNA topology and maintain chromosomes in an underwound state. Negative supercoiling favors strand separation, and DNA replication, transcription, recombination and repair, all of which involve strand separation. Also able to catalyze the interconversion of other topological isomers of dsDNA rings, including catenanes and knotted rings. Type II topoisomerases break and join 2 DNA strands simultaneously in an ATP-dependent manner. The chain is DNA gyrase subunit B from Streptomyces coelicolor (strain ATCC BAA-471 / A3(2) / M145).